The primary structure comprises 395 residues: ATP phosphoribosyltransferase regulatory subunit (395 aa).

Belongs to the class-II aminoacyl-tRNA synthetase family. HisZ subfamily. As to quaternary structure, heteromultimer composed of HisG and HisZ subunits.

The protein localises to the cytoplasm. It participates in amino-acid biosynthesis; L-histidine biosynthesis; L-histidine from 5-phospho-alpha-D-ribose 1-diphosphate: step 1/9. Functionally, required for the first step of histidine biosynthesis. May allow the feedback regulation of ATP phosphoribosyltransferase activity by histidine. This is ATP phosphoribosyltransferase regulatory subunit from Ectopseudomonas mendocina (strain ymp) (Pseudomonas mendocina).